The chain runs to 1190 residues: DNA-directed RNA polymerase subunit beta (1190 aa).

Belongs to the RNA polymerase beta chain family. As to quaternary structure, the RNAP catalytic core consists of 2 alpha, 1 beta, 1 beta' and 1 omega subunit. When a sigma factor is associated with the core the holoenzyme is formed, which can initiate transcription.

It carries out the reaction RNA(n) + a ribonucleoside 5'-triphosphate = RNA(n+1) + diphosphate. DNA-dependent RNA polymerase catalyzes the transcription of DNA into RNA using the four ribonucleoside triphosphates as substrates. In Streptococcus suis (strain 98HAH33), this protein is DNA-directed RNA polymerase subunit beta.